Consider the following 146-residue polypeptide: Large ribosomal subunit protein uL15 (146 aa).

The disordered stretch occupies residues methionine 1–glycine 55. The segment covering glycine 24–valine 37 has biased composition (gly residues).

This sequence belongs to the universal ribosomal protein uL15 family. Part of the 50S ribosomal subunit.

In terms of biological role, binds to the 23S rRNA. This Psychrobacter cryohalolentis (strain ATCC BAA-1226 / DSM 17306 / VKM B-2378 / K5) protein is Large ribosomal subunit protein uL15.